The primary structure comprises 1177 residues: Lon protease homolog, mitochondrial (1177 aa).

Disordered stretches follow at residues 72-197 and 353-386; these read RTNS…KSPA and AKKAKSGKTEDSKHDSKVTSKDGKETTEKYDSST. Basic and acidic residues predominate over residues 103 to 150; sequence RGRELWVQEKDKSDKPEKSDKPDKTDKTDKDKPEKQDKDKTDKPEKTK. Positions 154-182 are enriched in low complexity; that stretch reads TPSSTASTGAGEAAAPPSAPPSGSGSSSS. Residues 203-505 form the Lon N-terminal domain; the sequence is ILAVPISDRP…RALILLKREH (303 aa). A compositionally biased stretch (basic and acidic residues) spans 353 to 383; that stretch reads AKKAKSGKTEDSKHDSKVTSKDGKETTEKYD. 657 to 664 is a binding site for ATP; the sequence is GPPGVGKT. A compositionally biased stretch (basic and acidic residues) spans 883–916; it reads EKDKESAEKKTTKSKSKEVNEEPAAKEEKDKATE. Positions 883 to 932 are disordered; that stretch reads EKDKESAEKKTTKSKSKEVNEEPAAKEEKDKATESAESSETKVGTKAPPV. One can recognise a Lon proteolytic domain in the interval 964-1150; the sequence is DPPPGVVMGL…QDVYDVVFQG (187 aa). Active-site residues include Ser1056 and Lys1099.

It belongs to the peptidase S16 family. As to quaternary structure, homohexamer or homoheptamer. Organized in a ring with a central cavity.

It is found in the mitochondrion matrix. It carries out the reaction Hydrolysis of proteins in presence of ATP.. Its function is as follows. ATP-dependent serine protease that mediates the selective degradation of misfolded, unassembled or oxidatively damaged polypeptides as well as certain short-lived regulatory proteins in the mitochondrial matrix. May also have a chaperone function in the assembly of inner membrane protein complexes. Participates in the regulation of mitochondrial gene expression and in the maintenance of the integrity of the mitochondrial genome. Binds to mitochondrial DNA in a site-specific manner. The chain is Lon protease homolog, mitochondrial from Yarrowia lipolytica (strain CLIB 122 / E 150) (Yeast).